We begin with the raw amino-acid sequence, 297 residues long: Trimeric intracellular cation channel type A (297 aa).

Over 1 to 18 the chain is Lumenal; it reads MDLISSLSLGELALSFSR. A helical membrane pass occupies residues 19–39; that stretch reads VPLFPVFDLSYFIVSIIYLKY. Topologically, residues 40–51 are cytoplasmic; that stretch reads EPGSVELSRRHP. The helical transmembrane segment at 52–72 threads the bilayer; the sequence is VASWLCAMLHCFGSYILADLL. Over 73 to 85 the chain is Lumenal; it reads LGEPIIDYFSNSS. Residue glycine 74 coordinates Ca(2+). Residues 86-106 form a helical membrane-spanning segment; that stretch reads SILLASGVWYLIFFCPLDLFY. Residues 107 to 143 lie on the Cytoplasmic side of the membrane; the sequence is KCVCFLPVKLIFVAMKEVVRVRKIAVGIHHAHHYHHG. A 1,2-diacyl-sn-glycero-3-phospho-(1D-myo-inositol-4,5-bisphosphate) contacts are provided by lysine 122 and arginine 126. A helical transmembrane segment spans residues 144–164; sequence WFIMIATGWVKGSGVALLSNL. The Lumenal segment spans residues 165–177; sequence EQLLRGVWKPETN. The helical transmembrane segment at 178–198 threads the bilayer; that stretch reads EILHMSFPTKASLYGAILFTL. The Cytoplasmic portion of the chain corresponds to 199-208; it reads QQTRWLPVSK. The chain crosses the membrane as a helical span at residues 209–229; that stretch reads ASLIFVFTMFMVSCKVFLTAT. Residues 230 to 233 lie on the Lumenal side of the membrane; the sequence is HSHS. A helical transmembrane segment spans residues 234–254; the sequence is SPFDVLEGYICPVLFGATWGG. Residues 255–297 lie on the Cytoplasmic side of the membrane; sequence DHHHDNHGAPHGMGLGTQHSGLPAKAKEELSEGFRKKKTKKAD. A disordered region spans residues 259–297; sequence DNHGAPHGMGLGTQHSGLPAKAKEELSEGFRKKKTKKAD. Positions 279-288 are enriched in basic and acidic residues; that stretch reads KAKEELSEGF.

This sequence belongs to the TMEM38 family. Homotrimer; conformation seems to be controled by binding to diacylglycerol (DAG).

Its subcellular location is the sarcoplasmic reticulum membrane. It is found in the nucleus membrane. It carries out the reaction K(+)(in) = K(+)(out). Its activity is regulated as follows. Channel activity is activated by a change of voltage within the sarcoplasmic reticulum lumen and blocked by luminal high Ca(2+) levels. Functionally, intracellular monovalent cation channel required for maintenance of rapid intracellular calcium release. Acts as a potassium counter-ion channel that functions in synchronization with calcium release from intracellular stores. Opened by a change of voltage within the sarcoplasmic reticulum lumen. This Rattus norvegicus (Rat) protein is Trimeric intracellular cation channel type A.